The sequence spans 558 residues: CTP synthase (558 aa).

The interval 1–267 (MAKFVFVTGG…CLEMLDVLNL (267 aa)) is amidoligase domain. Position 13 (Ser13) interacts with CTP. Ser13 provides a ligand contact to UTP. ATP-binding positions include 14-19 (SIGKGI) and Asp71. Residues Asp71 and Glu141 each contribute to the Mg(2+) site. Residues 148–150 (DIE), 188–193 (KTKPTQ), and Lys224 each bind CTP. UTP-binding positions include 188–193 (KTKPTQ) and Lys224. The 243-residue stretch at 292-534 (KVALVGKYVQ…IEAAQLRLPA (243 aa)) folds into the Glutamine amidotransferase type-1 domain. L-glutamine is bound at residue Gly354. Residue Cys381 is the Nucleophile; for glutamine hydrolysis of the active site. L-glutamine-binding positions include 382-385 (LGMQ), Glu405, and Arg462. Residues His507 and Glu509 contribute to the active site. The tract at residues 536 to 558 (PDEALRRQSQTNISAQEQPSRIG) is disordered. The segment covering 542–558 (RQSQTNISAQEQPSRIG) has biased composition (polar residues).

The protein belongs to the CTP synthase family. Homotetramer.

The catalysed reaction is UTP + L-glutamine + ATP + H2O = CTP + L-glutamate + ADP + phosphate + 2 H(+). It carries out the reaction L-glutamine + H2O = L-glutamate + NH4(+). The enzyme catalyses UTP + NH4(+) + ATP = CTP + ADP + phosphate + 2 H(+). It functions in the pathway pyrimidine metabolism; CTP biosynthesis via de novo pathway; CTP from UDP: step 2/2. Its activity is regulated as follows. Allosterically activated by GTP, when glutamine is the substrate; GTP has no effect on the reaction when ammonia is the substrate. The allosteric effector GTP functions by stabilizing the protein conformation that binds the tetrahedral intermediate(s) formed during glutamine hydrolysis. Inhibited by the product CTP, via allosteric rather than competitive inhibition. In terms of biological role, catalyzes the ATP-dependent amination of UTP to CTP with either L-glutamine or ammonia as the source of nitrogen. Regulates intracellular CTP levels through interactions with the four ribonucleotide triphosphates. This Prochlorococcus marinus (strain MIT 9313) protein is CTP synthase.